The following is a 673-amino-acid chain: DNA ligase (673 aa).

Residues 36 to 40 (DAEYD), 85 to 86 (SL), and E116 contribute to the NAD(+) site. K118 (N6-AMP-lysine intermediate) is an active-site residue. NAD(+) is bound by residues R139, E176, K291, and K315. Zn(2+) is bound by residues C409, C412, C427, and C433. The BRCT domain maps to 592–673 (RGEQPLAGRT…LQALLQEHGR (82 aa)).

This sequence belongs to the NAD-dependent DNA ligase family. LigA subfamily. The cofactor is Mg(2+). Mn(2+) serves as cofactor.

It catalyses the reaction NAD(+) + (deoxyribonucleotide)n-3'-hydroxyl + 5'-phospho-(deoxyribonucleotide)m = (deoxyribonucleotide)n+m + AMP + beta-nicotinamide D-nucleotide.. DNA ligase that catalyzes the formation of phosphodiester linkages between 5'-phosphoryl and 3'-hydroxyl groups in double-stranded DNA using NAD as a coenzyme and as the energy source for the reaction. It is essential for DNA replication and repair of damaged DNA. The polypeptide is DNA ligase (Alkalilimnicola ehrlichii (strain ATCC BAA-1101 / DSM 17681 / MLHE-1)).